The primary structure comprises 78 residues: U-scoloptoxin(04)-Er1a (78 aa).

The N-terminal stretch at 1-24 (MTRHLIFAAVLLVCLFVCWNAIGA) is a signal peptide. A propeptide spanning residues 25 to 28 (QDAR) is cleaved from the precursor.

Belongs to the scoloptoxin-04 family. Contains 2 disulfide bonds. As to expression, expressed by the venom gland.

The protein localises to the secreted. The sequence is that of U-scoloptoxin(04)-Er1a from Ethmostigmus rubripes (Giant centipede).